A 257-amino-acid chain; its full sequence is L-aspartate dehydrogenase (257 aa).

NAD(+)-binding residues include Ala-124 and Asn-180. The active site involves His-208.

The protein belongs to the L-aspartate dehydrogenase family.

It catalyses the reaction L-aspartate + NADP(+) + H2O = oxaloacetate + NH4(+) + NADPH + H(+). It carries out the reaction L-aspartate + NAD(+) + H2O = oxaloacetate + NH4(+) + NADH + H(+). Its pathway is cofactor biosynthesis; NAD(+) biosynthesis; iminoaspartate from L-aspartate (dehydrogenase route): step 1/1. Functionally, specifically catalyzes the NAD or NADP-dependent dehydrogenation of L-aspartate to iminoaspartate. In Methanothermobacter thermautotrophicus (strain ATCC 29096 / DSM 1053 / JCM 10044 / NBRC 100330 / Delta H) (Methanobacterium thermoautotrophicum), this protein is L-aspartate dehydrogenase.